Consider the following 291-residue polypeptide: ADP-dependent (S)-NAD(P)H-hydrate dehydratase (291 aa).

Positions 5 to 273 (SKDILEEVIT…QALPTYMKKY (269 aa)) constitute a YjeF C-terminal domain. 3 residues coordinate (6S)-NADPHX: Ala-40, Gly-103, and His-153. AMP is bound at residue Gly-215. Asp-216 lines the (6S)-NADPHX pocket.

Belongs to the NnrD/CARKD family. As to quaternary structure, homotetramer. Mg(2+) is required as a cofactor.

It catalyses the reaction (6S)-NADHX + ADP = AMP + phosphate + NADH + H(+). The catalysed reaction is (6S)-NADPHX + ADP = AMP + phosphate + NADPH + H(+). Its function is as follows. Catalyzes the dehydration of the S-form of NAD(P)HX at the expense of ADP, which is converted to AMP. Together with NAD(P)HX epimerase, which catalyzes the epimerization of the S- and R-forms, the enzyme allows the repair of both epimers of NAD(P)HX, a damaged form of NAD(P)H that is a result of enzymatic or heat-dependent hydration. The protein is ADP-dependent (S)-NAD(P)H-hydrate dehydratase of Enterococcus faecalis (strain ATCC 700802 / V583).